Consider the following 547-residue polypeptide: ATP synthase subunit alpha (547 aa).

172–179 is a binding site for ATP; sequence GDRKTGKT.

This sequence belongs to the ATPase alpha/beta chains family. In terms of assembly, F-type ATPases have 2 components, CF(1) - the catalytic core - and CF(0) - the membrane proton channel. CF(1) has five subunits: alpha(3), beta(3), gamma(1), delta(1), epsilon(1). CF(0) has three main subunits: a(1), b(2) and c(9-12). The alpha and beta chains form an alternating ring which encloses part of the gamma chain. CF(1) is attached to CF(0) by a central stalk formed by the gamma and epsilon chains, while a peripheral stalk is formed by the delta and b chains.

It localises to the cell membrane. The enzyme catalyses ATP + H2O + 4 H(+)(in) = ADP + phosphate + 5 H(+)(out). Functionally, produces ATP from ADP in the presence of a proton gradient across the membrane. The alpha chain is a regulatory subunit. The chain is ATP synthase subunit alpha from Rhodococcus erythropolis (strain PR4 / NBRC 100887).